The sequence spans 142 residues: Large ribosomal subunit protein uL11 (142 aa).

The protein belongs to the universal ribosomal protein uL11 family. Part of the ribosomal stalk of the 50S ribosomal subunit. Interacts with L10 and the large rRNA to form the base of the stalk. L10 forms an elongated spine to which L12 dimers bind in a sequential fashion forming a multimeric L10(L12)X complex. In terms of processing, one or more lysine residues are methylated.

Functionally, forms part of the ribosomal stalk which helps the ribosome interact with GTP-bound translation factors. The protein is Large ribosomal subunit protein uL11 of Beijerinckia indica subsp. indica (strain ATCC 9039 / DSM 1715 / NCIMB 8712).